Consider the following 154-residue polypeptide: Transcriptional repressor NrdR (154 aa).

A zinc finger lies at 3–34 (CPFCGANDTKVIDSRLVAEGEQVRRRRECVAC). Positions 49–139 (PRLIKQDGTR…VYRRFQDLDE (91 aa)) constitute an ATP-cone domain.

Belongs to the NrdR family. Requires Zn(2+) as cofactor.

Negatively regulates transcription of bacterial ribonucleotide reductase nrd genes and operons by binding to NrdR-boxes. This is Transcriptional repressor NrdR from Pseudomonas putida (strain GB-1).